An 88-amino-acid chain; its full sequence is Small ribosomal subunit protein bS20 (88 aa).

The tract at residues 1-27 is disordered; the sequence is MANSKSAKKRALQSEKRRQHNASRRSM.

It belongs to the bacterial ribosomal protein bS20 family.

Functionally, binds directly to 16S ribosomal RNA. The sequence is that of Small ribosomal subunit protein bS20 from Shewanella loihica (strain ATCC BAA-1088 / PV-4).